Here is a 299-residue protein sequence, read N- to C-terminus: MRLHEVSGATETVEAAPAKINLALHVTGQRADGYHLLETLVTFTAAGDMIRIRDAATDSFSISGPFGDLLSAGDSGDNLVTRARDILRDALASTGQPARPVDIHLEKNLPVASGIGGGSADAAATLRGLLRHWDAAIAPEKLKSLALKLGADVPMCLASRPLIARGIGEDIEALTDLPELSMVLANPLKAVSTPEIFRRLQNKVNPHLPTPSTIGWATTGWMDFLAQSRNDLQPPAQALLPEIGEITGLLSEEGATLVRMSGSGATCFGIFHSFDAAKNAETSLRKKRPGWYFHATRTI.

Residue Lys-19 is part of the active site. 110–120 (PVASGIGGGSA) is an ATP binding site. The active site involves Asp-152.

This sequence belongs to the GHMP kinase family. IspE subfamily.

The enzyme catalyses 4-CDP-2-C-methyl-D-erythritol + ATP = 4-CDP-2-C-methyl-D-erythritol 2-phosphate + ADP + H(+). It functions in the pathway isoprenoid biosynthesis; isopentenyl diphosphate biosynthesis via DXP pathway; isopentenyl diphosphate from 1-deoxy-D-xylulose 5-phosphate: step 3/6. Functionally, catalyzes the phosphorylation of the position 2 hydroxy group of 4-diphosphocytidyl-2C-methyl-D-erythritol. The sequence is that of 4-diphosphocytidyl-2-C-methyl-D-erythritol kinase from Agrobacterium fabrum (strain C58 / ATCC 33970) (Agrobacterium tumefaciens (strain C58)).